The chain runs to 147 residues: Cyanate hydratase (147 aa).

Catalysis depends on residues Arg-88, Glu-91, and Ser-114.

It belongs to the cyanase family.

The enzyme catalyses cyanate + hydrogencarbonate + 3 H(+) = NH4(+) + 2 CO2. Functionally, catalyzes the reaction of cyanate with bicarbonate to produce ammonia and carbon dioxide. In Methylobacillus flagellatus (strain ATCC 51484 / DSM 6875 / VKM B-1610 / KT), this protein is Cyanate hydratase.